The following is a 164-amino-acid chain: Phosphopantetheine adenylyltransferase (164 aa).

Residue Thr9 participates in substrate binding. Residues 9–10 (TF) and His17 each bind ATP. Lys41, Leu78, and Arg92 together coordinate substrate. ATP-binding positions include 93 to 95 (GLR), Glu103, and 128 to 134 (RQAIASK).

This sequence belongs to the bacterial CoaD family. In terms of assembly, homohexamer. Mg(2+) is required as a cofactor.

Its subcellular location is the cytoplasm. It carries out the reaction (R)-4'-phosphopantetheine + ATP + H(+) = 3'-dephospho-CoA + diphosphate. The protein operates within cofactor biosynthesis; coenzyme A biosynthesis; CoA from (R)-pantothenate: step 4/5. Its function is as follows. Reversibly transfers an adenylyl group from ATP to 4'-phosphopantetheine, yielding dephospho-CoA (dPCoA) and pyrophosphate. In Paracoccus denitrificans (strain Pd 1222), this protein is Phosphopantetheine adenylyltransferase.